A 475-amino-acid chain; its full sequence is UDP-glucosyltransferase 102 (475 aa).

UDP-alpha-D-glucose contacts are provided by residues S278, 344–345 (WA), 362–370 (HCGWNSTLE), and 384–387 (YGEQ).

It belongs to the UDP-glycosyltransferase family.

It functions in the pathway secondary metabolite biosynthesis; terpenoid biosynthesis. Probable component of the triterpene saponins (e.g. ginsenosides) biosynthetic pathway. No detectable activity toward protopanaxatriol (PPT). The sequence is that of UDP-glucosyltransferase 102 (UGT102) from Panax ginseng (Korean ginseng).